Reading from the N-terminus, the 162-residue chain is uncharacterized protein (162 aa).

A run of 4 helical transmembrane segments spans residues 15–35 (VLAI…APAL), 43–63 (VCHF…FDLS), 70–90 (LTIL…QSFL), and 97–117 (LFDI…NILY).

The protein resides in the membrane. This is an uncharacterized protein from Schizosaccharomyces pombe (strain 972 / ATCC 24843) (Fission yeast).